Consider the following 263-residue polypeptide: Tropinone reductase homolog At2g29300 (263 aa).

13 to 37 (LVTGAASGIGYAIVEELAGFGARIH) lines the NADP(+) pocket. Serine 146 provides a ligand contact to substrate. The Proton acceptor role is filled by tyrosine 160.

The protein belongs to the short-chain dehydrogenases/reductases (SDR) family. SDR65C subfamily.

This Arabidopsis thaliana (Mouse-ear cress) protein is Tropinone reductase homolog At2g29300.